Here is a 243-residue protein sequence, read N- to C-terminus: Cysteine-rich secretory protein 2 (243 aa).

Positions 1 to 21 are cleaved as a signal peptide; it reads MALLPVLFLVTVLLPSLPAEG. An SCP domain is found at 41–169; that stretch reads VNKHNELRKA…SLKYYYVCQY (129 aa). Disulfide bonds link C189–C196, C192–C201, C205–C238, C214–C232, and C223–C236. Positions 205–238 constitute a ShKT domain; the sequence is CQYQDLLSNCDSLKNTAGCEHELLKEKCKATCLC.

The protein belongs to the CRISP family. Interacts with NSUN4 isoform 3. As to expression, testis and epididymis.

It localises to the secreted. Its function is as follows. May regulate some ion channels' activity and thereby regulate calcium fluxes during sperm capacitation. This Homo sapiens (Human) protein is Cysteine-rich secretory protein 2 (CRISP2).